We begin with the raw amino-acid sequence, 407 residues long: Peptidase T (407 aa).

Residue histidine 82 coordinates Zn(2+). Aspartate 84 is a catalytic residue. Position 143 (aspartate 143) interacts with Zn(2+). Glutamate 177 serves as the catalytic Proton acceptor. Residues glutamate 178, aspartate 200, and histidine 382 each coordinate Zn(2+).

This sequence belongs to the peptidase M20B family. The cofactor is Zn(2+).

It is found in the cytoplasm. It carries out the reaction Release of the N-terminal residue from a tripeptide.. In terms of biological role, cleaves the N-terminal amino acid of tripeptides. The protein is Peptidase T of Streptococcus pyogenes serotype M18 (strain MGAS8232).